Reading from the N-terminus, the 66-residue chain is Large ribosomal subunit protein bL33c (66 aa).

As to quaternary structure, component of the chloroplast large ribosomal subunit (LSU). Mature 70S chloroplast ribosomes of higher plants consist of a small (30S) and a large (50S) subunit. The 30S small subunit contains 1 molecule of ribosomal RNA (16S rRNA) and 24 different proteins. The 50S large subunit contains 3 rRNA molecules (23S, 5S and 4.5S rRNA) and 33 different proteins.

It is found in the plastid. Its subcellular location is the chloroplast. In terms of biological role, component of the chloroplast ribosome (chloro-ribosome), a dedicated translation machinery responsible for the synthesis of chloroplast genome-encoded proteins, including proteins of the transcription and translation machinery and components of the photosynthetic apparatus. This Spinacia oleracea (Spinach) protein is Large ribosomal subunit protein bL33c (rpl33).